Reading from the N-terminus, the 335-residue chain is 3-hydroxyproline 2-epimerase (335 aa).

Residue cysteine 91 is the Proton acceptor of the active site. Substrate is bound by residues 92 to 93 (GH), aspartate 251, and 256 to 257 (GS).

Belongs to the proline racemase family.

It catalyses the reaction trans-3-hydroxy-L-proline = cis-3-hydroxy-D-proline. It carries out the reaction trans-4-hydroxy-L-proline = cis-4-hydroxy-D-proline. Functionally, catalyzes the epimerization of trans-3-hydroxy-L-proline (t3LHyp) to cis-3-hydroxy-D-proline (c3DHyp) in vitro. Can also catalyze the epimerization of trans-4-hydroxy-L-proline (t3LHyp) to cis-4-hydroxy-D-proline (c4DHyp), albeit with 3.6-fold lower efficiency. Displays no proline racemase activity. This is 3-hydroxyproline 2-epimerase from Burkholderia multivorans (strain ATCC 17616 / 249).